The primary structure comprises 329 residues: Aspartate--ammonia ligase (329 aa).

It belongs to the class-II aminoacyl-tRNA synthetase family. AsnA subfamily.

The protein localises to the cytoplasm. The catalysed reaction is L-aspartate + NH4(+) + ATP = L-asparagine + AMP + diphosphate + H(+). The protein operates within amino-acid biosynthesis; L-asparagine biosynthesis; L-asparagine from L-aspartate (ammonia route): step 1/1. The polypeptide is Aspartate--ammonia ligase (Ureaplasma urealyticum serovar 10 (strain ATCC 33699 / Western)).